Reading from the N-terminus, the 150-residue chain is UPF0098 protein CT_736 (150 aa).

It belongs to the UPF0098 family.

This is UPF0098 protein CT_736 from Chlamydia trachomatis serovar D (strain ATCC VR-885 / DSM 19411 / UW-3/Cx).